Here is a 122-residue protein sequence, read N- to C-terminus: Acidic phospholipase A2 1 (122 aa).

7 disulfide bridges follow: cysteine 26–cysteine 115, cysteine 28–cysteine 44, cysteine 43–cysteine 94, cysteine 49–cysteine 122, cysteine 50–cysteine 87, cysteine 57–cysteine 81, and cysteine 75–cysteine 85. Ca(2+) is bound by residues tyrosine 27, glycine 29, and glycine 31. The active site involves histidine 47. Residue aspartate 48 participates in Ca(2+) binding. Aspartate 88 is a catalytic residue.

Belongs to the phospholipase A2 family. Group II subfamily. D49 sub-subfamily. Homodimer. Ca(2+) serves as cofactor. In terms of tissue distribution, expressed by the venom gland.

It is found in the secreted. It catalyses the reaction a 1,2-diacyl-sn-glycero-3-phosphocholine + H2O = a 1-acyl-sn-glycero-3-phosphocholine + a fatty acid + H(+). PLA2 catalyzes the calcium-dependent hydrolysis of the 2-acyl groups in 3-sn-phosphoglycerides. This is Acidic phospholipase A2 1 from Protobothrops mucrosquamatus (Taiwan habu).